Here is a 161-residue protein sequence, read N- to C-terminus: MSNSSKKHLDLPYRPGVGMMILNADNHIFVGKRIDTKISAWQMPQGGIVPGETPSIAAMREMLEEIGSDKGYIIAESKFWYSYDVPSFLIPKLWNGNFRGQKQRWFLIRFTGNNEDININTSNPEFDQWRWASLDELLSIIIPFKRKLYQAVVKEFESLIQ.

Residues Pro-12 to Lys-154 enclose the Nudix hydrolase domain. Residues Gly-46 to Gly-67 carry the Nudix box motif.

Belongs to the Nudix hydrolase family. RppH subfamily. A divalent metal cation is required as a cofactor.

Accelerates the degradation of transcripts by removing pyrophosphate from the 5'-end of triphosphorylated RNA, leading to a more labile monophosphorylated state that can stimulate subsequent ribonuclease cleavage. The protein is RNA pyrophosphohydrolase of Rickettsia peacockii (strain Rustic).